Consider the following 1012-residue polypeptide: Axonemal dynein light chain domain-containing protein 1 (1012 aa).

Residues 1-17 (MSLPKTPSTPLNSTSTS) are compositionally biased toward low complexity. The segment at 1–34 (MSLPKTPSTPLNSTSTSESKKLKVSVAKEGTRGL) is disordered. 3 coiled-coil regions span residues 317–402 (QRIL…IWSS), 447–486 (EDLA…IVKD), and 572–597 (SERQ…RING). A compositionally biased stretch (acidic residues) spans 841 to 854 (PEIDESFKEDEEES). Disordered regions lie at residues 841–879 (PEID…TEKE) and 963–1012 (LEEL…KKGH). Composition is skewed to basic and acidic residues over residues 855–879 (KEDR…TEKE) and 963–987 (LEEL…REVK). A compositionally biased stretch (acidic residues) spans 988–997 (EEEEQQEEEE).

As to expression, highly expressed in testis. Highly expressed in the round and late spermatids.

It localises to the cytoplasm. Functionally, may be essential for spermiogenesis and male fertility probably by regulating the manchette dynamics, spermatid head shaping and sperm flagellum assembly. In Homo sapiens (Human), this protein is Axonemal dynein light chain domain-containing protein 1.